Consider the following 405-residue polypeptide: Solute carrier family 35 member E2B (405 aa).

A disordered region spans residues 1–28 (MSSSVKTPALEELVPGSEEKPKGRSPLS). 10 helical membrane passes run 81-101 (LWFF…SLLG), 106-126 (MLGA…TLVP), 142-162 (FLMT…LGLV), 167-187 (VAVS…VIMS), 195-215 (TGLL…LCTA), 219-241 (SFNV…QNVF), 264-284 (AAAV…PVIG), 296-316 (VVLL…TAYA), 326-346 (FSVA…IVFG), and 347-367 (NKIT…VLLY). The segment at 380–405 (SLAAATGRAPDDTVEPLLPQDPRQHP) is disordered.

It belongs to the TPT transporter family. SLC35E subfamily.

The protein resides in the membrane. Functionally, putative transporter. This chain is Solute carrier family 35 member E2B (SLC35E2B), found in Homo sapiens (Human).